The sequence spans 448 residues: Asparagine--tRNA ligase (448 aa).

This sequence belongs to the class-II aminoacyl-tRNA synthetase family. In terms of assembly, homodimer.

The protein localises to the cytoplasm. The enzyme catalyses tRNA(Asn) + L-asparagine + ATP = L-asparaginyl-tRNA(Asn) + AMP + diphosphate + H(+). This chain is Asparagine--tRNA ligase, found in Streptococcus sanguinis (strain SK36).